Here is a 329-residue protein sequence, read N- to C-terminus: MSNKKLILKLFICSTIFITFVFALHDKRVVAASSVNELENWSKWMQPIPDNIPLARISIPGTHDSGTFKLQNPIKQVWGMTQEYDFRYQMDHGARIFDIRGRLTDDNTIVLHHGPLYLYVTLHEFINEAKQFLKDNPSETIIMSLKKEYEDMKGAEGSFSSTFEKNYFVDPIFLKTEGNIKLGDARGKIVLLKRYSGSNESGGYNNFYWPDNETFTTTVNQNVNVTVQDKYKVNYDEKVKSIKDTMDETMNNSEDLNHLYINFTSLSSGGTAWNSPYYYASYINPEIANDIKQKNPTRVGWVIQDYINEKWSPLLYQEVIRANKSLIKE.

Residues 1–31 (MSNKKLILKLFICSTIFITFVFALHDKRVVA) form the signal peptide. The 144-residue stretch at 51–194 (NIPLARISIP…ARGKIVLLKR (144 aa)) folds into the PI-PLC X-box domain. Catalysis depends on histidine 63, which acts as the Proton acceptor. Histidine 113 functions as the Proton donor in the catalytic mechanism.

It localises to the secreted. It catalyses the reaction a 1,2-diacyl-sn-glycero-3-phospho-(1D-myo-inositol) = 1D-myo-inositol 1,2-cyclic phosphate + a 1,2-diacyl-sn-glycerol. Cleaves glycosylphosphatidylinositol (GPI) and phosphatidylinositol (PI) anchors but not PI phosphates. The protein is 1-phosphatidylinositol phosphodiesterase of Bacillus thuringiensis.